Here is a 538-residue protein sequence, read N- to C-terminus: Putative outer membrane porin BglH (538 aa).

A signal peptide spans 1-25 (MFRRNIITSAILLMAPLAFSAQSLA).

It belongs to the porin LamB (TC 1.B.3) family.

It localises to the cell outer membrane. In terms of biological role, may be a sugar porin with a broad carbohydrate specificity. The polypeptide is Putative outer membrane porin BglH (bglH) (Escherichia coli O6:H1 (strain CFT073 / ATCC 700928 / UPEC)).